The chain runs to 194 residues: 3-isopropylmalate dehydratase small subunit (194 aa).

Belongs to the LeuD family. LeuD type 1 subfamily. Heterodimer of LeuC and LeuD.

The catalysed reaction is (2R,3S)-3-isopropylmalate = (2S)-2-isopropylmalate. It functions in the pathway amino-acid biosynthesis; L-leucine biosynthesis; L-leucine from 3-methyl-2-oxobutanoate: step 2/4. Its function is as follows. Catalyzes the isomerization between 2-isopropylmalate and 3-isopropylmalate, via the formation of 2-isopropylmaleate. The chain is 3-isopropylmalate dehydratase small subunit from Limosilactobacillus fermentum (strain NBRC 3956 / LMG 18251) (Lactobacillus fermentum).